The sequence spans 212 residues: Thymidylate kinase (212 aa).

Ala-2 bears the N-acetylalanine mark. ATP contacts are provided by residues 16–21 (RAGKST) and Arg-97. An LID region spans residues 133 to 157 (LQLQLADAAKRGAFGHERYENGAFQ). Lys-169 bears the N6-acetyllysine mark. 2 residues coordinate ATP: Lys-182 and Arg-192.

This sequence belongs to the thymidylate kinase family. As to quaternary structure, homodimer. Mg(2+) is required as a cofactor.

It carries out the reaction dTMP + ATP = dTDP + ADP. Its pathway is pyrimidine metabolism; dTTP biosynthesis. Its function is as follows. Catalyzes the phosphorylation of thymidine monophosphate (dTMP) to thymidine diphosphate (dTDP), the immediate precursor for the DNA building block dTTP, with ATP as the preferred phosphoryl donor in the presence of Mg(2+). This chain is Thymidylate kinase (DTYMK), found in Homo sapiens (Human).